The primary structure comprises 232 residues: uncharacterized protein (232 aa).

Helical transmembrane passes span Phe17 to Tyr37, Met54 to Leu74, Ala84 to Tyr104, Gly107 to Gly127, Gly138 to Phe158, Ser161 to Tyr181, and Met203 to Leu223.

It belongs to the BI1 family.

The protein localises to the cell membrane. This is an uncharacterized protein from Borreliella burgdorferi (strain ATCC 35210 / DSM 4680 / CIP 102532 / B31) (Borrelia burgdorferi).